The sequence spans 41 residues: Conotoxin Bu22 (41 aa).

Residues Ser1–Arg25 constitute a propeptide that is removed on maturation. 2 disulfides stabilise this stretch: Cys27–Cys33 and Cys28–Cys40.

It belongs to the conotoxin A superfamily. In terms of tissue distribution, expressed by the venom duct.

The protein localises to the secreted. The sequence is that of Conotoxin Bu22 from Conus bullatus (Bubble cone).